Here is a 237-residue protein sequence, read N- to C-terminus: Indole-3-glycerol phosphate synthase (237 aa).

It belongs to the TrpC family.

The enzyme catalyses 1-(2-carboxyphenylamino)-1-deoxy-D-ribulose 5-phosphate + H(+) = (1S,2R)-1-C-(indol-3-yl)glycerol 3-phosphate + CO2 + H2O. Its pathway is amino-acid biosynthesis; L-tryptophan biosynthesis; L-tryptophan from chorismate: step 4/5. The chain is Indole-3-glycerol phosphate synthase from Thermoplasma volcanium (strain ATCC 51530 / DSM 4299 / JCM 9571 / NBRC 15438 / GSS1).